A 146-amino-acid polypeptide reads, in one-letter code: Heat-stable 19 kDa antigen (146 aa).

The first 20 residues, 1 to 20, serve as a signal peptide directing secretion; that stretch reads MKFSLLSAIAAAVFVPFTSA.

This sequence belongs to the cerato-platanin family. Post-translationally, glycosylated.

The protein resides in the secreted. The polypeptide is Heat-stable 19 kDa antigen (CSA) (Coccidioides immitis (strain RS) (Valley fever fungus)).